Here is a 674-residue protein sequence, read N- to C-terminus: Growth arrest-specific protein 6 (674 aa).

Positions 1-27 (MPPPPGPAAALGTALLLLLLASESSHT) are cleaved as a signal peptide. The 42-residue stretch at 50 to 91 (FEEAKQGHLERECVEEVCSKEEAREVFENDPETEYFYPRYQE) folds into the Gla domain. The cysteines at positions 62 and 67 are disulfide-linked. Ser68 carries the post-translational modification Phosphoserine. One can recognise an EGF-like 1; calcium-binding domain in the interval 113-151 (LPDQCTPNPCDKKGTHICQDLMGNFFCVCTDGWGGRLCD). 14 disulfides stabilise this stretch: Cys117–Cys130, Cys122–Cys139, Cys141–Cys150, Cys157–Cys168, Cys164–Cys177, Cys179–Cys192, Cys198–Cys209, Cys204–Cys218, Cys220–Cys233, Cys239–Cys248, Cys244–Cys257, Cys259–Cys274, Cys280–Cys566, and Cys441–Cys467. The 41-residue stretch at 153–193 (DVNECVQKNGGCSQVCHNKPGSFQCACHSGFSLASDGQTCQ) folds into the EGF-like 2; calcium-binding domain. An EGF-like 3; calcium-binding domain is found at 194–234 (DIDECTDSDTCGDARCKNLPGSYSCLCDEGYTYSSKEKTCQ). The EGF-like 4; calcium-binding domain occupies 235–275 (DVDECQQDRCEQTCVNSPGSYTCHCDGRGGLKLSPDMDTCE). 2 consecutive Laminin G-like domains span residues 295–467 (GRMF…KMQC) and 474–666 (GSFF…SHSC). Residues Asp326 and Glu328 each contribute to the Ca(2+) site. Residue Asn417 is glycosylated (N-linked (GlcNAc...) asparagine). Arg437 contacts Ca(2+). An N-linked (GlcNAc...) asparagine glycan is attached at Asn488. Phosphothreonine is present on Thr609. A Phosphoserine modification is found at Ser614. Phosphothreonine occurs at positions 617 and 633. A Phosphotyrosine modification is found at Tyr636. Residues Cys639 and Cys666 are joined by a disulfide bond. Residue Asp652 coordinates Ca(2+).

In terms of assembly, heterodimer and heterotetramer with AXL. Post-translationally, gamma-carboxyglutamate residues are formed by vitamin K dependent carboxylation. These residues are essential for the binding of calcium.

The protein localises to the secreted. Ligand for tyrosine-protein kinase receptors AXL, TYRO3 and MER whose signaling is implicated in cell growth and survival, cell adhesion and cell migration. GAS6/AXL signaling plays a role in various processes such as endothelial cell survival during acidification by preventing apoptosis, optimal cytokine signaling during human natural killer cell development, hepatic regeneration, gonadotropin-releasing hormone neuron survival and migration, platelet activation, or regulation of thrombotic responses. In Mus musculus (Mouse), this protein is Growth arrest-specific protein 6 (Gas6).